A 198-amino-acid polypeptide reads, in one-letter code: Nucleoid occlusion factor SlmA (198 aa).

In terms of domain architecture, HTH tetR-type spans 10-70 (NRREEILQSL…SLIEFIEDSL (61 aa)). A DNA-binding region (H-T-H motif) is located at residues 33-52 (TTAKLAASVGVSEAALYRHF). A coiled-coil region spans residues 117–144 (EQDRLQGRINQLFERIEAQLRQVLREKR).

This sequence belongs to the nucleoid occlusion factor SlmA family. As to quaternary structure, homodimer. Interacts with FtsZ.

It localises to the cytoplasm. The protein localises to the nucleoid. Its function is as follows. Required for nucleoid occlusion (NO) phenomenon, which prevents Z-ring formation and cell division over the nucleoid. Acts as a DNA-associated cell division inhibitor that binds simultaneously chromosomal DNA and FtsZ, and disrupts the assembly of FtsZ polymers. SlmA-DNA-binding sequences (SBS) are dispersed on non-Ter regions of the chromosome, preventing FtsZ polymerization at these regions. The chain is Nucleoid occlusion factor SlmA from Salmonella typhi.